Here is a 624-residue protein sequence, read N- to C-terminus: Low affinity potassium transport system protein Kup (624 aa).

The next 12 helical transmembrane spans lie at 9 to 29, 49 to 69, 103 to 123, 137 to 157, 165 to 185, 213 to 233, 247 to 267, 276 to 296, 337 to 357, 365 to 385, 398 to 418, and 421 to 441; these read LPAITLAAIGVVYGDIGTSPL, VFGFLSLIFWLLIFVVSIKYL, VIMGLIGGSFFYGEVVITPAI, PQLDTWIVPLSIIVLTLLFMI, VGKLFAPIMLTWFLILAGLGL, VSFIALGAVVLSITGVEALYA, WFTVVLPSLTLNYFGQGALLL, PFFLLAPDWALIPLLIIAALA, IYIPFVNWMLYVAVVIVIVIV, LAAAYGIAVTGTMVLTSILST, FVALILIAFLCVDIPLFTANL, and LLSGGWLPLSLGTVMFIVMTT.

It belongs to the HAK/KUP transporter (TC 2.A.72) family.

It is found in the cell inner membrane. The enzyme catalyses K(+)(in) + H(+)(in) = K(+)(out) + H(+)(out). Responsible for the low-affinity transport of potassium into the cell. Likely operates as a K(+):H(+) symporter. The chain is Low affinity potassium transport system protein Kup from Shigella dysenteriae serotype 1 (strain Sd197).